The sequence spans 607 residues: MNKEERAKRQSKIRNFSIIAHIDHGKSTLADRILEKTNALTQREMKAQLLDSMDLERERGITIKLNAVQLNYKAKDGEEYILHLIDTPGHVDFTYEVSRSLAACEGAILVVDAAQGIEAQTLANVYLALDNNLEILPVINKIDLPSADPERVRQEVEDVIGLDASEAVLASAKAGIGIEEILEQIVEKVPAPTGDSEEPLQCMIFDSLYDPYRGVIAYIRVVNGTVKVGDKVRMMATGKEFEVTEVGVFTPKTTQRDELTVGDVGFLAASIKNVGDTRVGDTITHAKRPAAEPLAGYRKLNPMVFCGLYPIDSARYNDLRDALEKLELNDSALEFEPETSQALGFGFRCGFLGLLHMEILQERIEREFKIDLITTAPSVIYKVFLTNGEDMIVDNPSNMPDPQTIDRVEEPFVKAAIMVPNDYVGAVMEICQGKRGTFIDMQYLDETRVTLTYEIPLSEIVYDFFDQLKSNTKGYASFDYELIGYKPSKLVKMDILLNSEQVDALSFIVHRDSAYDRGKVIVEKLKELIPRQQFEVPIQATIGNKVVARSTIKAMRKNVLAKCYGGDISRKRKLLDKQKEGKKRMKSVGSVEVPQEAFMAVLKMDDN.

One can recognise a tr-type G domain in the interval 11-193 (SKIRNFSIIA…QIVEKVPAPT (183 aa)). GTP contacts are provided by residues 23-28 (DHGKST) and 140-143 (NKID).

The protein belongs to the TRAFAC class translation factor GTPase superfamily. Classic translation factor GTPase family. LepA subfamily.

The protein resides in the cell membrane. It carries out the reaction GTP + H2O = GDP + phosphate + H(+). Its function is as follows. Required for accurate and efficient protein synthesis under certain stress conditions. May act as a fidelity factor of the translation reaction, by catalyzing a one-codon backward translocation of tRNAs on improperly translocated ribosomes. Back-translocation proceeds from a post-translocation (POST) complex to a pre-translocation (PRE) complex, thus giving elongation factor G a second chance to translocate the tRNAs correctly. Binds to ribosomes in a GTP-dependent manner. The chain is Elongation factor 4 from Bacillus anthracis (strain CDC 684 / NRRL 3495).